The chain runs to 251 residues: Aliphatic sulfonates import ATP-binding protein SsuB (251 aa).

An ABC transporter domain is found at 19-238; that stretch reads GELRHVDKWY…PGEPGAHTER (220 aa). Residue 51–58 participates in ATP binding; that stretch reads GRSGSGKS.

Belongs to the ABC transporter superfamily. Aliphatic sulfonates importer (TC 3.A.1.17.2) family. The complex is composed of two ATP-binding proteins (SsuB), two transmembrane proteins (SsuC) and a solute-binding protein (SsuA).

The protein resides in the cell membrane. It catalyses the reaction ATP + H2O + aliphatic sulfonate-[sulfonate-binding protein]Side 1 = ADP + phosphate + aliphatic sulfonateSide 2 + [sulfonate-binding protein]Side 1.. In terms of biological role, part of the ABC transporter complex SsuABC involved in aliphatic sulfonates import. Responsible for energy coupling to the transport system. The chain is Aliphatic sulfonates import ATP-binding protein SsuB from Mycobacterium avium (strain 104).